The sequence spans 519 residues: Bifunctional NAD(P)H-hydrate repair enzyme Nnr (519 aa).

Positions 1–233 (MMRCGEGYPG…DIGIPPAAEI (233 aa)) are NAD(P)H-hydrate epimerase. The region spanning 25-233 (MAAADINAEY…DIGIPPAAEI (209 aa)) is the YjeF N-terminal domain. The interval 71–75 (GNGGD) is NADPHX 1; for epimerase activity. K(+)-binding residues include N72 and D144. The interval 148–154 (GTGVRGS) is NADPHX 1; for epimerase activity. D177 is a binding site for (6S)-NADPHX. S180 contacts K(+). Residues 235–515 (MGPGDLLRIP…DMIPSVMDPG (281 aa)) enclose the YjeF C-terminal domain. The segment at 235 to 519 (MGPGDLLRIP…SVMDPGFYGF (285 aa)) is ADP-dependent (S)-NAD(P)H-hydrate dehydratase. G338 serves as a coordination point for (6S)-NADPHX. Positions 389–395 (HMAEFSS) are NADPHX 2; for dehydratase activity. ADP contacts are provided by residues 428 to 432 (KGRID) and 447 to 456 (CPGMTVGGTG). Residue D457 coordinates (6S)-NADPHX.

It in the N-terminal section; belongs to the NnrE/AIBP family. The protein in the C-terminal section; belongs to the NnrD/CARKD family. K(+) is required as a cofactor.

It carries out the reaction (6S)-NADHX + ADP = AMP + phosphate + NADH + H(+). It catalyses the reaction (6S)-NADPHX + ADP = AMP + phosphate + NADPH + H(+). The catalysed reaction is (6R)-NADHX = (6S)-NADHX. The enzyme catalyses (6R)-NADPHX = (6S)-NADPHX. Bifunctional enzyme that catalyzes the epimerization of the S- and R-forms of NAD(P)HX and the dehydration of the S-form of NAD(P)HX at the expense of ADP, which is converted to AMP. This allows the repair of both epimers of NAD(P)HX, a damaged form of NAD(P)H that is a result of enzymatic or heat-dependent hydration. The protein is Bifunctional NAD(P)H-hydrate repair enzyme Nnr (nnr) of Methanothermobacter thermautotrophicus (strain ATCC 29096 / DSM 1053 / JCM 10044 / NBRC 100330 / Delta H) (Methanobacterium thermoautotrophicum).